The chain runs to 673 residues: Pesticin receptor (673 aa).

A signal peptide spans methionine 1–alanine 22. The TonB box signature appears at serine 30–serine 37. Residues serine 41–glutamine 155 form the TBDR plug domain. The TBDR beta-barrel domain occupies threonine 160–phenylalanine 672. The TonB C-terminal box motif lies at glutamine 657–phenylalanine 673.

It belongs to the TonB-dependent receptor family.

The protein localises to the cell outer membrane. Functionally, receptor for the bacteriocin pesticin and for the siderophore yersiniabactin. The protein is Pesticin receptor (fyuA) of Yersinia pestis.